Reading from the N-terminus, the 510-residue chain is DNA nucleotidylexotransferase (510 aa).

The disordered stretch occupies residues 1 to 22 (MDPLQAVHLGPRKKRPRQLGTP). The Nuclear localization signal signature appears at 11–17 (PRKKRPR). Residues 27-124 (PYDIRFRDLV…KPVEMMGRHQ (98 aa)) form the BRCT domain. Ser-134 is modified (phosphoserine). The interval 151-510 (SQYACQRRTT…DYIEPWERNA (360 aa)) is mediates interaction with DNTTIP2. The segment at 258-262 (VGLKT) is involved in DNA binding. A 2'-deoxyribonucleoside 5'-triphosphate-binding positions include 333 to 338 (GFRRGK) and 342 to 345 (HDVD). Mg(2+)-binding residues include Asp-343, Asp-345, and Asp-434. Residue 449–450 (GW) coordinates a 2'-deoxyribonucleoside 5'-triphosphate.

Belongs to the DNA polymerase type-X family. Interacts with PRP19 and DNTTIP1. Forms a ternary complex with DNTTIP2 and core histone. Released from this complex by PCNA. Interacts with TRERF1. Mg(2+) is required as a cofactor. As to expression, isoform TDT-L: Expressed in the thymus, and, at lower levels, in the bone marrow. Detected in both cycling and noncycling pro-B and pre-B cells (at protein level). Isoform TDT-S: Expressed in both cycling and noncycling pro-B, but not pre-B, cells (at protein level). Not detected in mature peripheral or germinal center B cells.

The protein resides in the nucleus. It localises to the cytoplasm. It carries out the reaction DNA(n) + a 2'-deoxyribonucleoside 5'-triphosphate = DNA(n+1) + diphosphate. Transferase that catalyzes the nontemplated addition of nucleoside triphosphate to coding ends during V(D)J recombination (N addition). Involved in the generation of diversity in the antigen-binding region of immunoglobulin heavy and light chains and T-cell receptors during B- and T-cell development. Does not act on double-stranded DNA with blunt ends. Functionally, 3'-to-5' DNA exonuclease. Involved in the generation of diversity in the antigen-binding region of immunoglobulin heavy and light chains and T-cell receptors during B- and T-cell development. Acts on single-stranded and double-stranded DNA with 3' or 5' extensions, but not on double-stranded DNA with blunt ends. Attenuates not only isoform TDT-S-catalyzed N addition, but also P (palindromic) addition in coding joins. Lacks terminal transferase activity. This Mus musculus (Mouse) protein is DNA nucleotidylexotransferase (Dntt).